The sequence spans 243 residues: Pyridoxine 5'-phosphate synthase (243 aa).

3-amino-2-oxopropyl phosphate is bound at residue Asn9. 11-12 contacts 1-deoxy-D-xylulose 5-phosphate; it reads DH. Arg20 lines the 3-amino-2-oxopropyl phosphate pocket. The Proton acceptor role is filled by His45. 1-deoxy-D-xylulose 5-phosphate is bound by residues Arg47 and His52. Catalysis depends on Glu72, which acts as the Proton acceptor. Thr102 contributes to the 1-deoxy-D-xylulose 5-phosphate binding site. The Proton donor role is filled by His193. Residues Gly194 and 215-216 each bind 3-amino-2-oxopropyl phosphate; that span reads GH.

This sequence belongs to the PNP synthase family. As to quaternary structure, homooctamer; tetramer of dimers.

Its subcellular location is the cytoplasm. The enzyme catalyses 3-amino-2-oxopropyl phosphate + 1-deoxy-D-xylulose 5-phosphate = pyridoxine 5'-phosphate + phosphate + 2 H2O + H(+). It functions in the pathway cofactor biosynthesis; pyridoxine 5'-phosphate biosynthesis; pyridoxine 5'-phosphate from D-erythrose 4-phosphate: step 5/5. Catalyzes the complicated ring closure reaction between the two acyclic compounds 1-deoxy-D-xylulose-5-phosphate (DXP) and 3-amino-2-oxopropyl phosphate (1-amino-acetone-3-phosphate or AAP) to form pyridoxine 5'-phosphate (PNP) and inorganic phosphate. This is Pyridoxine 5'-phosphate synthase from Vibrio cholerae serotype O1 (strain ATCC 39315 / El Tor Inaba N16961).